Consider the following 170-residue polypeptide: Photosystem I assembly protein Ycf3 (170 aa).

TPR repeat units follow at residues 35–68, 72–105, and 120–153; these read AFTYYRDGMLAQSEGNYAEALQNYYEAMRLEIDP, SYILYNIGLIHTSNGEHTKALEYYFRALERNPFL, and GEQAILQGDSEIAEAWFDQAAEYWKQAIALTPGN.

Belongs to the Ycf3 family.

The protein localises to the plastid. It localises to the chloroplast thylakoid membrane. Essential for the assembly of the photosystem I (PSI) complex. May act as a chaperone-like factor to guide the assembly of the PSI subunits. This Triticum aestivum (Wheat) protein is Photosystem I assembly protein Ycf3.